A 1603-amino-acid chain; its full sequence is Gag-Pol polyprotein (1603 aa).

The segment covering 128–141 (VGETTVQRDAKMAP) has biased composition (basic and acidic residues). The segment at 128-150 (VGETTVQRDAKMAPEETATPKTV) is disordered. A PPXY motif motif is present at residues 172 to 175 (PPPY). The short motif at 180 to 184 (LYPSL) is the LYPX(n)L motif element. The interval 181 to 217 (YPSLAGVGEQQGQGGDTPPGAEQSRAEPGHAGQAPGP) is disordered. 3 involved in capsid protein dimerization regions span residues 217–259 (PALT…KLIT), 290–298 (HDVTNLMRV), and 351–362 (GMVGNPQGQAAL). Residues 219–229 (LTDWARVREEL) carry the Nuclear export signal motif. 2 CCHC-type zinc fingers span residues 507–524 (GLCY…QCPK) and 533–550 (ERCQ…QCRK). A Nuclear/nucleolar localization signal motif is present at residues 524-527 (KKRK). Residues 543–575 (HNAKQCRKRDGNQGQRPGKGLSSGPWPGPEPPA) are disordered. In terms of domain architecture, Peptidase A2 spans 609–690 (ITALLDSGAD…VRGSILGRDC (82 aa)). The active-site For protease activity; shared with dimeric partner is aspartate 614. The region spanning 750–938 (LQLGHIEPSL…PGVQYLGYKL (189 aa)) is the Reverse transcriptase domain. Mg(2+) contacts are provided by aspartate 815, aspartate 890, aspartate 891, aspartate 1158, glutamate 1192, aspartate 1213, and aspartate 1272. Residues 1149-1280 (PVPGPTVFTD…ADSQATFQAY (132 aa)) enclose the RNase H type-1 domain. The Integrase-type zinc-finger motif lies at 1280-1321 (YPLREAKDLHTALHIGPRALSKACNISMQQAREVVQTCPHCN). Residues histidine 1289, histidine 1293, cysteine 1317, and cysteine 1320 each coordinate Zn(2+). Positions 1333–1496 (RGLGPLQIWQ…TPIQKHWRPT (164 aa)) constitute an Integrase catalytic domain. Mg(2+) contacts are provided by aspartate 1344, aspartate 1401, and glutamate 1437. The integrase-type DNA-binding region spans 1502–1550 (PPVKIRIETGEWEKGWNVLVWGRGYAAVKNRDTDKVIWVPSRKVKPDIT). Residues 1548 to 1567 (DITQKDEVTKKDEASPLFAG) are involved in homooctamerization. Residues 1569–1603 (SDWIPWEDEQEGLQGETASNKQERPGEDTLAANES) form a disordered region.

Active as a homodimer. As to quaternary structure, homodimer. Homomultimer. Homohexamer. In terms of assembly, homodimer; further associates as a homooctamer. Heterodimer of alpha and beta subunits. Three forms of RT exist: alpha-alpha (alpha-Pol), beta-beta (beta-Pol), and alpha-beta, with the major form being the heterodimer. Both the polymerase and RNase H active sites are located in the alpha subunit of heterodimeric RT alpha-beta. Mg(2+) serves as cofactor. Mn(2+) is required as a cofactor. Specific enzymatic cleavages in vivo yield mature proteins. In terms of processing, capsid protein p27: The cleavage at the C-terminus is slowly trimmed by the viral protease, sometimes being cut internally thereby generating the short version of the capsid protein and a capsid protein C-terminally extended by 3 amino acids in a ratio of 2:1.

The protein resides in the virion. The catalysed reaction is DNA(n) + a 2'-deoxyribonucleoside 5'-triphosphate = DNA(n+1) + diphosphate. The enzyme catalyses Endonucleolytic cleavage to 5'-phosphomonoester.. Functionally, capsid protein p27: Self-associates to form the irregular polyhedron core composed of hexamers and pentamers, that encapsulates the genomic RNA-nucleocapsid complex. Assembles as a tube in vitro. Binds to inositol hexakisphosphate (IP6), which allows the assembly of the polyhedral capsid. Its function is as follows. Plays a role in the oligomerization of the Gag polyprotein and in the stabilization of the immature particle. Essential layering element during tube assembly. Allows the cooperative binging of Gag to the host plasma membrane. Binds strongly to viral nucleic acids and promotes their packaging. Plays a role in the maturation-stabilization of the viral dimeric RNA via highly structured zinc-binding motifs. In terms of biological role, the aspartyl protease mediates proteolytic cleavages of Gag and Gag-Pol polyproteins during or shortly after the release of the virion from the plasma membrane. Cleavages take place as an ordered, step-wise cascade to yield mature proteins. This process is called maturation. Displays maximal activity during the budding process just prior to particle release from the cell. Functionally, catalyzes viral DNA integration into the host chromosome, by performing a series of DNA cutting and joining reactions. This recombination event is an essential step in the viral replication cycle. Has a strong preference for using the 3'-OH at the viral DNA end as a nucleophile. This chain is Gag-Pol polyprotein (gag-pol), found in Gallus gallus (Chicken).